Here is a 107-residue protein sequence, read N- to C-terminus: MVNFNQFLKQAQSMQKKMQEAQEQMANARYTGKAGGGLVEVIATGKGEVEKISIDESLLKAEEKEMLEDLIKVAFNNAQQKCDEDSQNSLSGALNGMRLPPGFKMPF.

This sequence belongs to the YbaB/EbfC family. Homodimer.

Its subcellular location is the cytoplasm. The protein localises to the nucleoid. Its function is as follows. Binds to DNA and alters its conformation. May be involved in regulation of gene expression, nucleoid organization and DNA protection. This Rickettsia rickettsii (strain Sheila Smith) protein is Nucleoid-associated protein A1G_07310.